The primary structure comprises 255 residues: Pimeloyl-[acyl-carrier protein] methyl ester esterase (255 aa).

Substrate contacts are provided by residues Trp18, 78–79 (SL), and 139–143 (FLALD). The active-site Nucleophile is the Ser78. Catalysis depends on residues Asp203 and His233. His233 serves as a coordination point for substrate.

The protein belongs to the AB hydrolase superfamily. Carboxylesterase BioH family. Monomer.

It is found in the cytoplasm. It catalyses the reaction 6-carboxyhexanoyl-[ACP] methyl ester + H2O = 6-carboxyhexanoyl-[ACP] + methanol + H(+). Its pathway is cofactor biosynthesis; biotin biosynthesis. Functionally, the physiological role of BioH is to remove the methyl group introduced by BioC when the pimeloyl moiety is complete. It allows to synthesize pimeloyl-ACP via the fatty acid synthetic pathway through the hydrolysis of the ester bonds of pimeloyl-ACP esters. The chain is Pimeloyl-[acyl-carrier protein] methyl ester esterase from Xylella fastidiosa (strain M23).